We begin with the raw amino-acid sequence, 341 residues long: Aspartate--ammonia ligase (341 aa).

It belongs to the class-II aminoacyl-tRNA synthetase family. AsnA subfamily.

Its subcellular location is the cytoplasm. It carries out the reaction L-aspartate + NH4(+) + ATP = L-asparagine + AMP + diphosphate + H(+). The protein operates within amino-acid biosynthesis; L-asparagine biosynthesis; L-asparagine from L-aspartate (ammonia route): step 1/1. The chain is Aspartate--ammonia ligase from Clostridium tetani (strain Massachusetts / E88).